We begin with the raw amino-acid sequence, 1134 residues long: Mediator of RNA polymerase II transcription subunit 12 (1134 aa).

This sequence belongs to the Mediator complex subunit 12 family. In terms of assembly, component of the srb8-11 complex which consists of rb8, srb9(TRAP240), srb10 and srb11. The srb8-11 complex associates with the Mediator complex thereby blocking association with RNA polymerase II and leading to reduced transcriptional activation by Mediator.

The protein resides in the nucleus. Its function is as follows. Component of the srb8-11 complex. The srb8-11 complex is a regulatory module of the Mediator complex which is itself involved in regulation of basal and activated RNA polymerase II-dependent transcription. The srb8-11 complex may be involved in the transcriptional repression of a subset of genes regulated by Mediator. It may inhibit the association of the Mediator complex with RNA polymerase II to form the holoenzyme complex. In Schizosaccharomyces pombe (strain 972 / ATCC 24843) (Fission yeast), this protein is Mediator of RNA polymerase II transcription subunit 12 (srb8).